The primary structure comprises 231 residues: Large ribosomal subunit protein uL1 (231 aa).

Belongs to the universal ribosomal protein uL1 family. As to quaternary structure, part of the 50S ribosomal subunit.

Functionally, binds directly to 23S rRNA. The L1 stalk is quite mobile in the ribosome, and is involved in E site tRNA release. Protein L1 is also a translational repressor protein, it controls the translation of the L11 operon by binding to its mRNA. This is Large ribosomal subunit protein uL1 from Francisella tularensis subsp. tularensis (strain FSC 198).